The chain runs to 455 residues: Putative PTS system EIIBC component YbbF (455 aa).

Residues 8–90 (HHLAQKILEL…SKLVSAEEGA (83 aa)) form the PTS EIIB type-1 domain. Cysteine 30 serves as the catalytic Phosphocysteine intermediate; for EIIB activity. Positions 116 to 455 (RKIASIFIPL…YKDEMASQFD (340 aa)) constitute a PTS EIIC type-1 domain. The next 10 membrane-spanning stretches (helical) occupy residues 118-138 (IASIFIPLIPALVASGLITGI), 154-174 (IAIILTVIGSGLFTYLGILVG), 181-201 (FGGTPALGALAGILIINPEIA), 210-230 (LLPGRGGLIGVLFAAIFIAYT), 250-270 (VSLLITGIVTYVVFMPLGGFI), 281-301 (ILDIGGIAAGFILGATFLPLV), 325-345 (LLPILAMGGAGQVGAAFAVFV), 355-375 (AIAGGLPSGLLGIGEPLIFGV), 399-419 (YFQVATIAIGVSGLPLSFLVL), and 423-443 (IILYIVGLFISYAAGFLLTYA).

The protein resides in the cell membrane. In terms of biological role, the phosphoenolpyruvate-dependent sugar phosphotransferase system (sugar PTS), a major carbohydrate active -transport system, catalyzes the phosphorylation of incoming sugar substrates concomitantly with their translocation across the cell membrane. This chain is Putative PTS system EIIBC component YbbF (ybbF), found in Bacillus subtilis (strain 168).